Here is a 467-residue protein sequence, read N- to C-terminus: Receptor-like cytosolic serine/threonine-protein kinase RBK1 (467 aa).

Residues 1-24 show a composition bias toward basic and acidic residues; that stretch reads MAVEDNKNSESKNHQEVELHRNDL. Positions 1–73 are disordered; it reads MAVEDNKNSE…PFSNTTKTVS (73 aa). Low complexity predominate over residues 40–71; that stretch reads SDSDNSSSSCSSCSSDDKSSSTSSPFSNTTKT. Threonine 142 bears the Phosphothreonine mark. The region spanning 153–430 is the Protein kinase domain; the sequence is FNPENMIGKG…LRGEDGPAEL (278 aa). ATP is bound by residues 159-167 and lysine 181; that span reads IGKGGHAEV. Aspartate 278 (proton acceptor) is an active-site residue. Serine 282 carries the post-translational modification Phosphoserine. Residue threonine 318 is modified to Phosphothreonine. Tyrosine 326 is subject to Phosphotyrosine.

The protein belongs to the protein kinase superfamily. Ser/Thr protein kinase family. Interacts with ARAC5 and ARAC10. As to expression, mostly expressed in vasculature, hydathode endothem, leaf mesophyll cells and trichomes.

The protein localises to the cytoplasm. The protein resides in the endomembrane system. It is found in the nucleus. It carries out the reaction L-seryl-[protein] + ATP = O-phospho-L-seryl-[protein] + ADP + H(+). The enzyme catalyses L-threonyl-[protein] + ATP = O-phospho-L-threonyl-[protein] + ADP + H(+). This Arabidopsis thaliana (Mouse-ear cress) protein is Receptor-like cytosolic serine/threonine-protein kinase RBK1 (RBK1).